We begin with the raw amino-acid sequence, 163 residues long: SKP1-like protein 3 (163 aa).

Residues 105–163 form an interaction with the F-box domain of F-box proteins region; that stretch reads LRAANYLNISGLLDLTCKAVADQMRGKTPAQMREHFNIKNDYTPEEEAEVRNENRWAFE.

This sequence belongs to the SKP1 family. In terms of assembly, part of a SCF (SKP1-cullin-F-box) protein ligase complex. Interacts with ADO3/FKF1 and At3g61590. As to expression, highly expressed in siliques.

Its subcellular location is the nucleus. The protein operates within protein modification; protein ubiquitination. In terms of biological role, involved in ubiquitination and subsequent proteasomal degradation of target proteins. Together with CUL1, RBX1 and a F-box protein, it forms a SCF E3 ubiquitin ligase complex. The functional specificity of this complex depends on the type of F-box protein. In the SCF complex, it serves as an adapter that links the F-box protein to CUL1. The protein is SKP1-like protein 3 (ASK3) of Arabidopsis thaliana (Mouse-ear cress).